A 369-amino-acid chain; its full sequence is tRNA-specific 2-thiouridylase MnmA (369 aa).

ATP contacts are provided by residues 7–14 (GISGGVDS) and Met33. The interval 93–95 (NPD) is interaction with target base in tRNA. The Nucleophile role is filled by Cys98. An intrachain disulfide couples Cys98 to Cys195. Gly123 serves as a coordination point for ATP. Residues 145–147 (KDQ) form an interaction with tRNA region. The active-site Cysteine persulfide intermediate is Cys195. Residues 307 to 308 (RY) form an interaction with tRNA region.

The protein belongs to the MnmA/TRMU family. As to quaternary structure, interacts with TusE.

The protein localises to the cytoplasm. The catalysed reaction is S-sulfanyl-L-cysteinyl-[protein] + uridine(34) in tRNA + AH2 + ATP = 2-thiouridine(34) in tRNA + L-cysteinyl-[protein] + A + AMP + diphosphate + H(+). In terms of biological role, catalyzes the 2-thiolation of uridine at the wobble position (U34) of tRNA(Lys), tRNA(Glu) and tRNA(Gln), leading to the formation of s(2)U34, the first step of tRNA-mnm(5)s(2)U34 synthesis. Sulfur is provided by IscS, via a sulfur-relay system. Binds ATP and its substrate tRNAs. The polypeptide is tRNA-specific 2-thiouridylase MnmA (Blochmanniella floridana).